A 236-amino-acid polypeptide reads, in one-letter code: 2-C-methyl-D-erythritol 4-phosphate cytidylyltransferase (236 aa).

Belongs to the IspD/TarI cytidylyltransferase family. IspD subfamily. Homodimer.

It carries out the reaction 2-C-methyl-D-erythritol 4-phosphate + CTP + H(+) = 4-CDP-2-C-methyl-D-erythritol + diphosphate. It functions in the pathway isoprenoid biosynthesis; isopentenyl diphosphate biosynthesis via DXP pathway; isopentenyl diphosphate from 1-deoxy-D-xylulose 5-phosphate: step 2/6. In terms of biological role, catalyzes the formation of 4-diphosphocytidyl-2-C-methyl-D-erythritol from CTP and 2-C-methyl-D-erythritol 4-phosphate (MEP). The protein is 2-C-methyl-D-erythritol 4-phosphate cytidylyltransferase of Shigella flexneri serotype 5b (strain 8401).